Consider the following 228-residue polypeptide: Urease accessory protein UreF (228 aa).

This sequence belongs to the UreF family. UreD, UreF and UreG form a complex that acts as a GTP-hydrolysis-dependent molecular chaperone, activating the urease apoprotein by helping to assemble the nickel containing metallocenter of UreC. The UreE protein probably delivers the nickel.

It is found in the cytoplasm. Its function is as follows. Required for maturation of urease via the functional incorporation of the urease nickel metallocenter. This is Urease accessory protein UreF from Alkalilimnicola ehrlichii (strain ATCC BAA-1101 / DSM 17681 / MLHE-1).